A 368-amino-acid chain; its full sequence is Phospho-N-acetylmuramoyl-pentapeptide-transferase (368 aa).

10 helical membrane passes run 34 to 54 (GAVV…IDHL), 79 to 99 (TPTM…VLWA), 102 to 122 (LNPY…VGFY), 140 to 160 (ARLL…VRLG), 176 to 196 (LVIK…VGAG), 207 to 227 (GLAI…AYLA), 247 to 267 (LAVL…FNAP), 271 to 291 (IFMG…IAVA), 296 to 316 (IVLA…IVQV), and 345 to 365 (QIVI…LSTL).

The protein belongs to the glycosyltransferase 4 family. MraY subfamily. Mg(2+) is required as a cofactor.

Its subcellular location is the cell inner membrane. The catalysed reaction is UDP-N-acetyl-alpha-D-muramoyl-L-alanyl-gamma-D-glutamyl-meso-2,6-diaminopimeloyl-D-alanyl-D-alanine + di-trans,octa-cis-undecaprenyl phosphate = di-trans,octa-cis-undecaprenyl diphospho-N-acetyl-alpha-D-muramoyl-L-alanyl-D-glutamyl-meso-2,6-diaminopimeloyl-D-alanyl-D-alanine + UMP. It participates in cell wall biogenesis; peptidoglycan biosynthesis. Its function is as follows. Catalyzes the initial step of the lipid cycle reactions in the biosynthesis of the cell wall peptidoglycan: transfers peptidoglycan precursor phospho-MurNAc-pentapeptide from UDP-MurNAc-pentapeptide onto the lipid carrier undecaprenyl phosphate, yielding undecaprenyl-pyrophosphoryl-MurNAc-pentapeptide, known as lipid I. This Bradyrhizobium sp. (strain ORS 278) protein is Phospho-N-acetylmuramoyl-pentapeptide-transferase.